A 151-amino-acid polypeptide reads, in one-letter code: Small ribosomal subunit protein uS15y (151 aa).

This sequence belongs to the universal ribosomal protein uS15 family.

In Oryza sativa subsp. japonica (Rice), this protein is Small ribosomal subunit protein uS15y.